A 218-amino-acid polypeptide reads, in one-letter code: Large ribosomal subunit protein uL3 (218 aa).

It belongs to the universal ribosomal protein uL3 family. As to quaternary structure, part of the 50S ribosomal subunit. Forms a cluster with proteins L14 and L19.

Its function is as follows. One of the primary rRNA binding proteins, it binds directly near the 3'-end of the 23S rRNA, where it nucleates assembly of the 50S subunit. This chain is Large ribosomal subunit protein uL3, found in Corynebacterium diphtheriae (strain ATCC 700971 / NCTC 13129 / Biotype gravis).